Consider the following 420-residue polypeptide: Tyrosine--tRNA ligase (420 aa).

L-tyrosine is bound at residue Tyr38. The 'HIGH' region motif lies at 43–52 (PTGDSLHIGH). Residues Tyr169 and Gln173 each contribute to the L-tyrosine site. The 'KMSKS' region signature appears at 231–235 (KFGKS). Position 234 (Lys234) interacts with ATP. One can recognise an S4 RNA-binding domain in the interval 353-419 (KNIVEFLVET…GKRKYTLVKI (67 aa)).

The protein belongs to the class-I aminoacyl-tRNA synthetase family. TyrS type 1 subfamily. In terms of assembly, homodimer.

It is found in the cytoplasm. It catalyses the reaction tRNA(Tyr) + L-tyrosine + ATP = L-tyrosyl-tRNA(Tyr) + AMP + diphosphate + H(+). In terms of biological role, catalyzes the attachment of tyrosine to tRNA(Tyr) in a two-step reaction: tyrosine is first activated by ATP to form Tyr-AMP and then transferred to the acceptor end of tRNA(Tyr). The polypeptide is Tyrosine--tRNA ligase (Lactobacillus johnsonii (strain CNCM I-12250 / La1 / NCC 533)).